An 89-amino-acid chain; its full sequence is Large ribosomal subunit protein eL34 (89 aa).

Positions 41-69 are disordered; sequence RPLNGVPRGRPSELRKLPKTAKRPERPYP. A compositionally biased stretch (basic and acidic residues) spans 50-66; that stretch reads RPSELRKLPKTAKRPER.

The protein belongs to the eukaryotic ribosomal protein eL34 family.

This is Large ribosomal subunit protein eL34 from Thermococcus gammatolerans (strain DSM 15229 / JCM 11827 / EJ3).